A 1355-amino-acid polypeptide reads, in one-letter code: NACHT, LRR and PYD domains-containing protein 1 homolog (1355 aa).

Residues 257-458 enclose the NACHT domain; that stretch reads KTVILCGDSG…SVPLLCWMVC (202 aa). 263-270 contacts ATP; that stretch reads GDSGRGKS. Residues 977–1109 form a ZU5 region; the sequence is DSDQWVQVEP…FHAKILQPMF (133 aa). Residues 977–1252 enclose the FIIND domain; the sequence is DSDQWVQVEP…NKTESDLFQS (276 aa). Residues 1110-1252 are UPA; it reads SPKTVLVKLG…NKTESDLFQS (143 aa). A CARD domain is found at 1278-1354; that stretch reads LIKSVENVDT…NLLNHLPSSD (77 aa).

This sequence belongs to the NLRP family. In terms of assembly, interacts with the C-terminal part of nlrp1 (NACHT, LRR and PYD domains-containing protein 1, C-terminus) in absence of pathogens and other damage-associated signals. As to quaternary structure, interacts with the N-terminal part of nlrp1 (NACHT, LRR and PYD domains-containing protein 1, N-terminus) in absence of pathogens and other damage-associated signals. Homomultimer; forms the nlrp1 inflammasome polymeric complex, a filament composed of homopolymers of this form in response to pathogens and other damage-associated signals. The nlrp1 inflammasome polymeric complex associates with pycard/asc. Interacts (via CARD domain) with pycard/asc (via CARD domain); leading to pro-inflammatory caspases (caspa and/or caspb) recruitment. Pro-caspase-a and pro-caspase-b filament formation increases local enzyme concentration, resulting in trans-autocleavage and activation. Active caspa and caspb then processes il1b and il18 precursors, leading to the release of mature cytokines in the extracellular milieu and inflammatory response. In terms of processing, autocatalytically cleaved. Autocatalytic cleavage in FIIND region occurs constitutively, prior to activation signals, and is required for inflammasome activity (IL1B release), possibly by facilitating pro-inflammatory caspases (caspa and/or caspb) binding. Both N- and C-terminal parts remain associated non-covalently. Ubiquitinated in response to pathogen-associated signals, leading to its degradation by the proteasome and subsequent release of the cleaved C-terminal part of the protein (NACHT, LRR and PYD domains-containing protein 1, C-terminus), which polymerizes and forms the nlrp1 inflammasome. Expressed in adult spleen, head kidney, gill and skin and also in the embryo.

Its subcellular location is the cytoplasm. The protein resides in the inflammasome. Its activity is regulated as follows. nlrp1 inflammasome is activated by pathogens and other damage-associated signals: activation promotes ubiquitination and degradation of the N-terminal part, releasing the cleaved C-terminal part of the protein (NACHT, LRR and PYD domains-containing protein 1, C-terminus), which polymerizes and forms the nlrp1 inflammasome. Acts as the sensor component of the nlrp1 inflammasome, which mediates inflammasome activation in response to various pathogen-associated signals, leading to subsequent pyroptosis. Inflammasomes are supramolecular complexes that assemble in the cytosol in response to pathogens and other damage-associated signals and play critical roles in innate immunity and inflammation. Acts as a recognition receptor (PRR): recognizes specific pathogens and other damage-associated signals, and mediates the formation of the inflammasome polymeric complex. In response to pathogen-associated signals, the N-terminal part of nlrp1 is degraded by the proteasome, releasing the cleaved C-terminal part of the protein (NACHT, LRR and PYD domains-containing protein 1, C-terminus), which polymerizes to initiate the formation of the inflammasome complex: the inflammasome recruits and activate pro-inflammatory caspases (caspa and/or caspb), leading to pyroptosis. Functionally, constitutes the precursor of the nlrp1 inflammasome, which mediates autoproteolytic processing within the FIIND domain to generate the N-terminal and C-terminal parts, which are associated non-covalently in absence of pathogens and other damage-associated signals. Its function is as follows. Regulatory part that prevents formation of the nlrp1 inflammasome: in absence of pathogens and other damage-associated signals, interacts with the C-terminal part of nlrp1 (NACHT, LRR and PYD domains-containing protein 1, C-terminus), preventing activation of the nlrp1 inflammasome. In response to pathogen-associated signals, this part is ubiquitinated and degraded by the proteasome, releasing the cleaved C-terminal part of the protein, which polymerizes and forms the nlrp1 inflammasome. In terms of biological role, constitutes the active part of the nlrp1 inflammasome. In absence of pathogens and other damage-associated signals, interacts with the N-terminal part of nlrp1 (NACHT, LRR and PYD domains-containing protein 1, N-terminus), preventing activation of the nlrp1 inflammasome. In response to pathogen-associated signals, the N-terminal part of nlrp1 is degraded by the proteasome, releasing this form, which polymerizes to form the nlrp1 inflammasome complex: the nlrp1 inflammasome complex then directly recruits and activates pro-inflammatory caspases (caspa and/or caspb) activation, leading to subsequent pyroptosis. This chain is NACHT, LRR and PYD domains-containing protein 1 homolog, found in Danio rerio (Zebrafish).